The sequence spans 249 residues: Diaminopimelate epimerase (249 aa).

Residues asparagine 11 and asparagine 60 each coordinate substrate. Cysteine 69 (proton donor) is an active-site residue. Substrate-binding positions include 70-71, asparagine 164, and 182-183; these read GN and ER. Cysteine 192 functions as the Proton acceptor in the catalytic mechanism. 193 to 194 serves as a coordination point for substrate; the sequence is GT.

Belongs to the diaminopimelate epimerase family. As to quaternary structure, homodimer.

The protein localises to the cytoplasm. It catalyses the reaction (2S,6S)-2,6-diaminopimelate = meso-2,6-diaminopimelate. The protein operates within amino-acid biosynthesis; L-lysine biosynthesis via DAP pathway; DL-2,6-diaminopimelate from LL-2,6-diaminopimelate: step 1/1. In terms of biological role, catalyzes the stereoinversion of LL-2,6-diaminopimelate (L,L-DAP) to meso-diaminopimelate (meso-DAP), a precursor of L-lysine and an essential component of the bacterial peptidoglycan. The chain is Diaminopimelate epimerase from Campylobacter jejuni subsp. jejuni serotype O:2 (strain ATCC 700819 / NCTC 11168).